A 274-amino-acid polypeptide reads, in one-letter code: Formamidopyrimidine-DNA glycosylase (274 aa).

P2 functions as the Schiff-base intermediate with DNA in the catalytic mechanism. E3 (proton donor) is an active-site residue. K59 (proton donor; for beta-elimination activity) is an active-site residue. DNA is bound by residues H93, R112, and R155. Residues 240–274 (QVYGRTGRPCPRCGQPLERVRLGGRSTHFCPRCQV) form an FPG-type zinc finger. Catalysis depends on R264, which acts as the Proton donor; for delta-elimination activity.

Belongs to the FPG family. In terms of assembly, monomer. Zn(2+) is required as a cofactor.

The enzyme catalyses Hydrolysis of DNA containing ring-opened 7-methylguanine residues, releasing 2,6-diamino-4-hydroxy-5-(N-methyl)formamidopyrimidine.. The catalysed reaction is 2'-deoxyribonucleotide-(2'-deoxyribose 5'-phosphate)-2'-deoxyribonucleotide-DNA = a 3'-end 2'-deoxyribonucleotide-(2,3-dehydro-2,3-deoxyribose 5'-phosphate)-DNA + a 5'-end 5'-phospho-2'-deoxyribonucleoside-DNA + H(+). Its function is as follows. Involved in base excision repair of DNA damaged by oxidation or by mutagenic agents. Acts as a DNA glycosylase that recognizes and removes damaged bases. Has a preference for oxidized purines, such as 7,8-dihydro-8-oxoguanine (8-oxoG). Has AP (apurinic/apyrimidinic) lyase activity and introduces nicks in the DNA strand. Cleaves the DNA backbone by beta-delta elimination to generate a single-strand break at the site of the removed base with both 3'- and 5'-phosphates. This Moorella thermoacetica (strain ATCC 39073 / JCM 9320) protein is Formamidopyrimidine-DNA glycosylase.